The sequence spans 423 residues: Zinc finger protein Gfi-1 (423 aa).

Residues Met1–Ser20 are SNAG domain. The disordered stretch occupies residues Met1–Cys76. Phosphoserine occurs at positions 20 and 57. Positions Ser48–Ser57 are enriched in basic and acidic residues. The interval Arg141 to Cys258 is required for interaction with RELA. 6 consecutive C2H2-type zinc fingers follow at residues Tyr256–His279, Phe285–His307, Phe313–His335, Tyr341–His363, His369–His391, and Phe397–His420.

As to quaternary structure, interacts (via the zinc-finger domain) with ARIH2; the interaction prevents GFI1 ubiquitination and proteasomal degradation. Forms a complex with EHMT2 and HDAC1 to promote 'Lys-9' dimethylation of H3 (H3K9Me2) and repress expression of target genes. Interacts directly with EHMT2. Interacts with RUNX1T1; the interaction represses HDAC-mediated transcriptional activity. Interacts (via the C-terminal zinc fingers) with ZBTB17; the interaction results in the recruitment of GFI1 to the CDKN1A/p21 and CDKNIB promoters and repression of transcription. Interacts with U2AF1L4. Component of RCOR-GFI-KDM1A-HDAC complexes. Interacts directly with RCOR1, KDM1A and HDAC2. Also interacts with HDAC1. Component of the GFI1-AJUBA-HDAC1 repressor complex. Interacts directly with AJUBA (via its LIM domains); the interaction results in the HDAC-dependent corepression of a subset of GFI1 target genes and, occurs independently of the SNAG domain. Interacts with SPI1; the interaction inhibits SPI1 transcriptional activity targeted at macrophage-specific genes, repressing macrophage differentiation of myeloid progenitor cells and promoting granulocyte commitment. Interacts with PIAS3; the interaction relieves the inhibitory effect of PIAS3 on STAT3-mediated transcriptional activity. Interacts with RELA; the interaction occurs on liposaccharide (LPS) stimulation and controls RELA DNA binding activity and regulates endotoxin-mediated TOLL-like receptor inflammatory response. In terms of processing, ubiquitinated.

It is found in the nucleus. Functionally, transcription repressor essential for hematopoiesis. Functions in a cell-context and development-specific manner. Binds to 5'-TAAATCAC[AT]GCA-3' in the promoter region of a large number of genes. Component of several complexes, including the EHMT2-GFI1-HDAC1, AJUBA-GFI1-HDAC1 and RCOR-GFI-KDM1A-HDAC complexes, that suppress, via histone deacetylase (HDAC) recruitment, a number of genes implicated in multilineage blood cell development. Regulates neutrophil differentiation, promotes proliferation of lymphoid cells, and is required for granulocyte development. Inhibits SPI1 transcriptional activity at macrophage-specific genes, repressing macrophage differentiation of myeloid progenitor cells and promoting granulocyte commitment. Mediates, together with U2AF1L4, the alternative splicing of CD45 and controls T-cell receptor signaling. Regulates the endotoxin-mediated Toll-like receptor (TLR) inflammatory response by antagonizing RELA. Cooperates with CBFA2T2 to regulate ITGB1-dependent neurite growth. Controls cell-cycle progression by repressing CDKNIA/p21 transcription in response to TGFB1 via recruitment of GFI1 by ZBTB17 to the CDKNIA/p21 and CDKNIB promoters. Required for the maintenance of inner ear hair cells. In addition to its role in transcription, acts as a substrate adapter for PRMT1 in the DNA damage response. Facilitates the recognition of TP53BP1 and MRE11 substrates by PRMT1, promoting their methylation and the DNA damage response. This Mus musculus (Mouse) protein is Zinc finger protein Gfi-1 (Gfi1).